A 51-amino-acid chain; its full sequence is Large ribosomal subunit protein eL39 (51 aa).

A disordered region spans residues 32–51; the sequence is KRRVTRSPTRRHWRRVKLKA.

The protein belongs to the eukaryotic ribosomal protein eL39 family.

This Pyrobaculum arsenaticum (strain DSM 13514 / JCM 11321 / PZ6) protein is Large ribosomal subunit protein eL39.